Reading from the N-terminus, the 23-residue chain is Acidic phospholipase A2 CTs-A2 (23 aa).

Requires Ca(2+) as cofactor. In terms of processing, contains 7 disulfide bonds. As to expression, expressed by the venom gland.

It is found in the secreted. The catalysed reaction is a 1,2-diacyl-sn-glycero-3-phosphocholine + H2O = a 1-acyl-sn-glycero-3-phosphocholine + a fatty acid + H(+). In terms of biological role, snake venom phospholipase A2 (PLA2) that shows a moderate inhibition of ADP-induced human platelet aggregation when tested on platelet rich plasma. Exhibits moderate hydrolytic activities and prefers the anionic micelles (dPPC with deoxycholate) to the zwitterionic micelles (dPPC with Triton X-100). PLA2 catalyzes the calcium-dependent hydrolysis of the 2-acyl groups in 3-sn-phosphoglycerides. This chain is Acidic phospholipase A2 CTs-A2, found in Trimeresurus stejnegeri (Chinese green tree viper).